Here is a 426-residue protein sequence, read N- to C-terminus: Enolase (426 aa).

A (2R)-2-phosphoglycerate-binding site is contributed by Gln165. Glu209 serves as the catalytic Proton donor. Mg(2+)-binding residues include Asp244, Glu287, and Asp313. Residues Lys338, Arg367, Ser368, and Lys389 each coordinate (2R)-2-phosphoglycerate. Residue Lys338 is the Proton acceptor of the active site.

Belongs to the enolase family. It depends on Mg(2+) as a cofactor.

It localises to the cytoplasm. The protein localises to the secreted. It is found in the cell surface. The enzyme catalyses (2R)-2-phosphoglycerate = phosphoenolpyruvate + H2O. Its pathway is carbohydrate degradation; glycolysis; pyruvate from D-glyceraldehyde 3-phosphate: step 4/5. Functionally, catalyzes the reversible conversion of 2-phosphoglycerate (2-PG) into phosphoenolpyruvate (PEP). It is essential for the degradation of carbohydrates via glycolysis. This is Enolase from Methanococcus vannielii (strain ATCC 35089 / DSM 1224 / JCM 13029 / OCM 148 / SB).